The following is a 705-amino-acid chain: Kinesin-like protein KIF2A (705 aa).

Residues 1–216 are globular; sequence MATANFGKIQ…LDYRPLTTAD (216 aa). Residues 65 to 186 are disordered; that stretch reads DLVPDEDIEP…QELREKRAQD (122 aa). Residue Ser75 is modified to Phosphoserine. A Phosphothreonine modification is found at Thr96. Lys101 is modified (N6-acetyllysine). Residues 122–139 are compositionally biased toward polar residues; it reads LPEQSSSAQQNGSVSDIS. Residues Ser134 and Ser139 each carry the phosphoserine modification. The span at 158 to 186 shows a compositional bias: basic and acidic residues; the sequence is CVKEVEKLQEKREKRRLQQQELREKRAQD. The Kinesin motor domain maps to 222–552; it reads RICVCVRKRP…LRYANRVKEL (331 aa). Position 312 to 319 (312 to 319) interacts with ATP; the sequence is GQTGSGKT. Thr528 and Tyr545 each carry phosphoserine. Positions 659–698 form a coiled coil; sequence ATQLEAILEQKIDILTELRDKVKSFRAALQEEEQASKQIN.

The protein belongs to the TRAFAC class myosin-kinesin ATPase superfamily. Kinesin family. MCAK/KIF2 subfamily. In terms of assembly, interacts with AURKA and PLK1. Interacts with PSRC1. Interacts with MCRS1; the interaction enhances recruitment of KIF2A to the minus ends of spindle microtubules which promotes chromosome alignment. Highest level in lung. High level in ovary, moderate levels in heart, kidney, placenta, skeletal muscle and spleen (at protein level). Pancreas and spleen express a shorter isoform (at protein level). Expressed in the flagellum of elongated spermatids and sperm in the testis lumen (at protein level). Isoform 1 expressed in neuronal cells. Isoform 2 expressed in astrocytes and fibroblasts.

It localises to the cytoplasm. It is found in the cytoskeleton. Its subcellular location is the microtubule organizing center. The protein resides in the centrosome. The protein localises to the spindle pole. It localises to the spindle. It is found in the lysosome. Its function is as follows. Plus end-directed microtubule-dependent motor required for normal brain development. May regulate microtubule dynamics during axonal growth. Required for normal progression through mitosis. Required for normal congress of chromosomes at the metaphase plate. Required for normal spindle dynamics during mitosis. Promotes spindle turnover. Implicated in formation of bipolar mitotic spindles. Has microtubule depolymerization activity. The sequence is that of Kinesin-like protein KIF2A (Kif2a) from Mus musculus (Mouse).